The sequence spans 311 residues: Aspartate carbamoyltransferase catalytic subunit (311 aa).

2 residues coordinate carbamoyl phosphate: arginine 55 and threonine 56. An L-aspartate-binding site is contributed by lysine 85. 3 residues coordinate carbamoyl phosphate: arginine 106, histidine 134, and glutamine 137. L-aspartate is bound by residues arginine 167 and arginine 228. Carbamoyl phosphate is bound by residues leucine 266 and proline 267.

Belongs to the aspartate/ornithine carbamoyltransferase superfamily. ATCase family. As to quaternary structure, heterododecamer (2C3:3R2) of six catalytic PyrB chains organized as two trimers (C3), and six regulatory PyrI chains organized as three dimers (R2).

The enzyme catalyses carbamoyl phosphate + L-aspartate = N-carbamoyl-L-aspartate + phosphate + H(+). It participates in pyrimidine metabolism; UMP biosynthesis via de novo pathway; (S)-dihydroorotate from bicarbonate: step 2/3. Functionally, catalyzes the condensation of carbamoyl phosphate and aspartate to form carbamoyl aspartate and inorganic phosphate, the committed step in the de novo pyrimidine nucleotide biosynthesis pathway. The sequence is that of Aspartate carbamoyltransferase catalytic subunit from Psychromonas ingrahamii (strain DSM 17664 / CCUG 51855 / 37).